The sequence spans 607 residues: UvrABC system protein C (607 aa).

Residues 16–94 enclose the GIY-YIG domain; it reads GRPGVYRMFD…IKEWRPPYNI (79 aa). A UVR domain is found at 203–238; the sequence is NALSDELNATMEKAAMALDFERAAELRDQVALLRRV.

This sequence belongs to the UvrC family. Interacts with UvrB in an incision complex.

It localises to the cytoplasm. In terms of biological role, the UvrABC repair system catalyzes the recognition and processing of DNA lesions. UvrC both incises the 5' and 3' sides of the lesion. The N-terminal half is responsible for the 3' incision and the C-terminal half is responsible for the 5' incision. This chain is UvrABC system protein C, found in Pseudomonas savastanoi pv. phaseolicola (strain 1448A / Race 6) (Pseudomonas syringae pv. phaseolicola (strain 1448A / Race 6)).